Here is a 164-residue protein sequence, read N- to C-terminus: Interferon gamma (164 aa).

The N-terminal stretch at 1-19 (MTCQTYNLFVLSVIMIYYG) is a signal peptide. 2 N-linked (GlcNAc...) asparagine glycosylation sites follow: Asn42 and Asn61.

The protein belongs to the type II (or gamma) interferon family. As to quaternary structure, homodimer.

Its subcellular location is the secreted. Produced by lymphocytes activated by specific antigens or mitogens. IFN-gamma, in addition to having antiviral activity, has important immunoregulatory functions. It is a potent activator of macrophages, it has antiproliferative effects on transformed cells and it can potentiate the antiviral and antitumor effects of the type I interferons. The sequence is that of Interferon gamma (IFNG) from Phasianus colchicus colchicus (Black-necked pheasant).